Consider the following 166-residue polypeptide: Telethonin (166 aa).

Phosphoserine is present on S39. The segment at 145-166 is disordered; it reads VSKPGTLRRSLSRSMSQEAQRG. Polar residues predominate over residues 156 to 166; sequence SRSMSQEAQRG.

In terms of assembly, interacts with MYOZ1, MYOZ2 and MYOZ3. Interacts with CSRP3. Interacts directly with the N-terminal Ig-like domains of 2 titin (TTN) molecules. Interacts with ANKRD2; the interaction is direct.

Its subcellular location is the cytoplasm. The protein localises to the myofibril. The protein resides in the sarcomere. Functionally, muscle assembly regulating factor. Mediates the antiparallel assembly of titin (TTN) molecules at the sarcomeric Z-disk. The sequence is that of Telethonin (TCAP) from Bos taurus (Bovine).